An 84-amino-acid polypeptide reads, in one-letter code: U21-theraphotoxin-Cg1a 1 (84 aa).

A signal peptide spans 1-21 (MKVSVLITLAVLGVMFLLTSA). Residues 22–47 (EERGSDQMDSPAWLKSMEIIFQSEER) constitute a propeptide that is removed on maturation. 3 disulfide bridges follow: cysteine 49–cysteine 63, cysteine 56–cysteine 68, and cysteine 62–cysteine 76. Position 82 is a valine amide (valine 82).

Belongs to the neurotoxin 10 (Hwtx-1) family. 05 (F4a) subfamily. In terms of tissue distribution, expressed by the venom gland.

The protein resides in the secreted. In terms of biological role, probable ion channel inhibitor. The chain is U21-theraphotoxin-Cg1a 1 from Chilobrachys guangxiensis (Chinese earth tiger tarantula).